The primary structure comprises 152 residues: Transcriptional regulator MraZ (152 aa).

SpoVT-AbrB domains follow at residues 5–52 (ASAI…PLHE) and 81–124 (AHEV…DEQA).

This sequence belongs to the MraZ family. Forms oligomers.

It is found in the cytoplasm. The protein localises to the nucleoid. This Shewanella sp. (strain MR-7) protein is Transcriptional regulator MraZ.